We begin with the raw amino-acid sequence, 238 residues long: Pyridoxine 5'-phosphate synthase (238 aa).

N6 provides a ligand contact to 3-amino-2-oxopropyl phosphate. 8–9 (DH) contacts 1-deoxy-D-xylulose 5-phosphate. Residue R17 participates in 3-amino-2-oxopropyl phosphate binding. The active-site Proton acceptor is the H42. R44 and H49 together coordinate 1-deoxy-D-xylulose 5-phosphate. E69 serves as the catalytic Proton acceptor. T99 serves as a coordination point for 1-deoxy-D-xylulose 5-phosphate. Residue H190 is the Proton donor of the active site. Residues G191 and 212-213 (GH) contribute to the 3-amino-2-oxopropyl phosphate site.

Belongs to the PNP synthase family. As to quaternary structure, homooctamer; tetramer of dimers.

The protein localises to the cytoplasm. It catalyses the reaction 3-amino-2-oxopropyl phosphate + 1-deoxy-D-xylulose 5-phosphate = pyridoxine 5'-phosphate + phosphate + 2 H2O + H(+). The protein operates within cofactor biosynthesis; pyridoxine 5'-phosphate biosynthesis; pyridoxine 5'-phosphate from D-erythrose 4-phosphate: step 5/5. Catalyzes the complicated ring closure reaction between the two acyclic compounds 1-deoxy-D-xylulose-5-phosphate (DXP) and 3-amino-2-oxopropyl phosphate (1-amino-acetone-3-phosphate or AAP) to form pyridoxine 5'-phosphate (PNP) and inorganic phosphate. The sequence is that of Pyridoxine 5'-phosphate synthase from Chlorobium phaeobacteroides (strain BS1).